The primary structure comprises 355 residues: Homeobox protein knotted-1-like 12 (355 aa).

Disordered stretches follow at residues 52–82 and 207–233; these read AAGPSQYHGHGHPHHGGGHHHSKHGGAGGGE and ECVGSSEDDMDPSGRENEPPEIDPRAE. A compositionally biased stretch (basic residues) spans 60–75; it reads GHGHPHHGGGHHHSKH. Basic and acidic residues predominate over residues 218–233; that stretch reads PSGRENEPPEIDPRAE. The ELK domain occupies 236–256; the sequence is ELKFQLLKKYSGYLSSLRQEF. A DNA-binding region (homeobox; TALE-type) is located at residues 257–320; the sequence is SKKKKKGKLP…NQRKRHWKPS (64 aa).

This sequence belongs to the TALE/KNOX homeobox family. In terms of tissue distribution, expressed in stems, rachis and inflorescence.

It is found in the nucleus. Probable transcription factor that may be involved in shoot formation during embryogenesis. The polypeptide is Homeobox protein knotted-1-like 12 (OSH15) (Oryza sativa subsp. japonica (Rice)).